The primary structure comprises 1097 residues: Kinesin-like protein KIF1C (1097 aa).

The Kinesin motor domain occupies 5 to 347 (SVKVAVRVRP…LRYADRTKQI (343 aa)). 96-103 (GQTGAGKS) contributes to the ATP binding site. Position 294 is a phosphoserine (S294). Positions 358 to 380 (NARLIRELQEEVARLRELLMAQG) form a coiled coil. Positions 397–434 (GGVLPAASSPPAPASPSSPPPHNGELEPSFSPSAEPQI) are disordered. A compositionally biased stretch (pro residues) spans 404 to 418 (SSPPAPASPSSPPPH). Positions 437–478 (EEAMERLQETEKIIAELNETWEEKLRKTEALRMEREALLAEM) form a coiled coil. A Phosphoserine modification is found at S491. An FHA domain is found at 520-587 (TRVGQVDVDI…LKSGNRIVMG (68 aa)). A coiled-coil region spans residues 630–671 (EQQGIDIKLEMEKRLQDLENQYRKEKEEADLLLEQQRLYADS). Phosphoserine is present on residues S671 and S673. The stretch at 824-868 (AEVEDLRAHIDKLTGILQEVKLQNSSKDRELQALRDRMLRMERVI) forms a coiled coil. Disordered stretches follow at residues 897–921 (EAVSNDHSPAVRPSSPPQSSWERVS) and 946–1097 (QGLQ…GAAV). A Phosphoserine modification is found at S911. The span at 949 to 958 (QGSGGRGGGL) shows a compositional bias: gly residues. Over residues 997–1015 (GPQPPEEVTAPPPPPNRRP) the composition is skewed to pro residues. The segment covering 1016 to 1026 (PSPRRPHRPRR) has biased composition (basic residues). At S1028 the chain carries Phosphoserine. Residue R1036 is modified to Omega-N-methylarginine. Pro residues predominate over residues 1059–1077 (QPQPYPAQRPGPRYPPYTT). A Phosphothreonine modification is found at T1077. S1086 is subject to Phosphoserine. A compositionally biased stretch (basic and acidic residues) spans 1086–1097 (SAPDLKESGAAV).

It belongs to the TRAFAC class myosin-kinesin ATPase superfamily. Kinesin family. Unc-104 subfamily.

The protein resides in the cytoplasm. Its subcellular location is the cytoskeleton. In terms of biological role, probable motor protein. This is Kinesin-like protein KIF1C (Kif1c) from Rattus norvegicus (Rat).